Consider the following 518-residue polypeptide: Fusicoccin H C-9 hydroxylase (518 aa).

The helical transmembrane segment at 12-29 threads the bilayer; that stretch reads HLLLISTVIAVLAALIVS. N-linked (GlcNAc...) asparagine glycans are attached at residues N81 and N168. C456 lines the heme pocket.

Belongs to the cytochrome P450 family. Heme is required as a cofactor.

The protein resides in the membrane. Its pathway is mycotoxin biosynthesis. Its function is as follows. Cytochrome P450 monooxygenase; part of the 2 gene clusters that mediate the biosynthesis of fusicoccins, diterpene glucosides that display phytohormone-like activity and function as potent activators of plasma membrane H(+)-ATPases in plants by modifying 14-3-3 proteins and cause the plant disease constriction canker. The first step in the pathway is performed by the fusicoccadiene synthase PaFS that possesses both prenyl transferase and terpene cyclase activity, converting isopentenyl diphosphate and dimethylallyl diphosphate into geranylgeranyl diphosphate (GGDP) and successively converting GGDP into fusicocca-2,10(14)-diene, a precursor for fusicoccin H. The second step is the oxidation at the C-8 position by the cytochrome P450 monooxygenase PaP450-2 to yield fusicocca-2,10(14)-diene-8-beta-ol. The cytochrome P450 monooxygenase PaP450-1 then catalyzes the hydroxylation at the C-16 position to produce fusicocca-2,10(14)-diene-8-beta,16-diol. The dioxygenase fc-dox then catalyzes the 16-oxydation of fusicocca-2,10(14)-diene-8-beta,16-diol to yield an aldehyde (8-beta-hydroxyfusicocca-1,10(14)-dien-16-al). The short-chain dehydrogenase/reductase fc-sdr catalyzes the reduction of the aldehyde to yield fusicocca-1,10(14)-diene-8-beta,16-diol. The next step is the hydroxylation at C-9 performed by the cytochrome P450 monooxygenase PaP450-3 that leads to fusicoccin H aglycon which is glycosylated to fusicoccin H by the O-glycosyltransferase PaGT. Hydroxylation at C-12 by the cytochrome P450 monooxygenase PaP450-4 leads then to the production of fusicoccin Q and is followed by methylation by the O-methyltransferase PaMT to yield fusicoccin P. Fusicoccin P is further converted to fusicoccin J via prenylation by the O-glucose prenyltransferase PaPT. Cytochrome P450 monooxygenase PaP450-5 then performs hydroxylation at C-19 to yield dideacetyl-fusicoccin A which is acetylated to 3'-O-deacetyl-fusicoccin A by the O-acetyltransferase PaAT-2. Finally, a another acetylation by the O-acetyltransferase PaAT-1 yields fusicoccin A. In Phomopsis amygdali (Fusicoccum amygdali), this protein is Fusicoccin H C-9 hydroxylase.